The chain runs to 430 residues: UDP-N-acetylglucosamine 1-carboxyvinyltransferase 1 (430 aa).

A phosphoenolpyruvate-binding site is contributed by 22–23 (KN). Arg-93 lines the UDP-N-acetyl-alpha-D-glucosamine pocket. Cys-117 functions as the Proton donor in the catalytic mechanism. Residue Cys-117 is modified to 2-(S-cysteinyl)pyruvic acid O-phosphothioketal. Residues 122–126 (RPVDL), Asp-305, and Val-327 contribute to the UDP-N-acetyl-alpha-D-glucosamine site.

The protein belongs to the EPSP synthase family. MurA subfamily.

It is found in the cytoplasm. It catalyses the reaction phosphoenolpyruvate + UDP-N-acetyl-alpha-D-glucosamine = UDP-N-acetyl-3-O-(1-carboxyvinyl)-alpha-D-glucosamine + phosphate. It participates in cell wall biogenesis; peptidoglycan biosynthesis. In terms of biological role, cell wall formation. Adds enolpyruvyl to UDP-N-acetylglucosamine. This is UDP-N-acetylglucosamine 1-carboxyvinyltransferase 1 from Listeria innocua serovar 6a (strain ATCC BAA-680 / CLIP 11262).